Reading from the N-terminus, the 1108-residue chain is Isoleucine--tRNA ligase (1108 aa).

A 'HIGH' region motif is present at residues 53 to 63 (PFANGLPHYGH). The 'KMSKS' region signature appears at 654-658 (KLSKR). Lys657 contacts ATP.

It belongs to the class-I aminoacyl-tRNA synthetase family. IleS type 2 subfamily. Monomer. Requires Zn(2+) as cofactor.

The protein resides in the cytoplasm. It catalyses the reaction tRNA(Ile) + L-isoleucine + ATP = L-isoleucyl-tRNA(Ile) + AMP + diphosphate. Functionally, catalyzes the attachment of isoleucine to tRNA(Ile). As IleRS can inadvertently accommodate and process structurally similar amino acids such as valine, to avoid such errors it has two additional distinct tRNA(Ile)-dependent editing activities. One activity is designated as 'pretransfer' editing and involves the hydrolysis of activated Val-AMP. The other activity is designated 'posttransfer' editing and involves deacylation of mischarged Val-tRNA(Ile). In Rickettsia bellii (strain OSU 85-389), this protein is Isoleucine--tRNA ligase.